The sequence spans 371 residues: Probable RNA 3'-terminal phosphate cyclase-like protein (371 aa).

This sequence belongs to the RNA 3'-terminal cyclase family. Type 2 subfamily. Part of the small subunit (SSU) processome, composed of more than 70 proteins and the RNA chaperone small nucleolar RNA (snoRNA) U3.

The protein resides in the nucleus. It is found in the nucleolus. Its function is as follows. Part of the small subunit (SSU) processome, first precursor of the small eukaryotic ribosomal subunit. During the assembly of the SSU processome in the nucleolus, many ribosome biogenesis factors, an RNA chaperone and ribosomal proteins associate with the nascent pre-rRNA and work in concert to generate RNA folding, modifications, rearrangements and cleavage as well as targeted degradation of pre-ribosomal RNA by the RNA exosome. Does not have cyclase activity. The polypeptide is Probable RNA 3'-terminal phosphate cyclase-like protein (rcl1) (Dictyostelium discoideum (Social amoeba)).